The following is a 427-amino-acid chain: Glutamyl-tRNA reductase (427 aa).

Substrate-binding positions include 48-51 (TCNR), serine 99, 104-106 (EDQ), and glutamine 110. Cysteine 49 functions as the Nucleophile in the catalytic mechanism. 179–184 (GAGEMG) lines the NADP(+) pocket.

Belongs to the glutamyl-tRNA reductase family. As to quaternary structure, homodimer.

The enzyme catalyses (S)-4-amino-5-oxopentanoate + tRNA(Glu) + NADP(+) = L-glutamyl-tRNA(Glu) + NADPH + H(+). The protein operates within porphyrin-containing compound metabolism; protoporphyrin-IX biosynthesis; 5-aminolevulinate from L-glutamyl-tRNA(Glu): step 1/2. In terms of biological role, catalyzes the NADPH-dependent reduction of glutamyl-tRNA(Glu) to glutamate 1-semialdehyde (GSA). The sequence is that of Glutamyl-tRNA reductase from Methanocella arvoryzae (strain DSM 22066 / NBRC 105507 / MRE50).